A 267-amino-acid polypeptide reads, in one-letter code: REH2-associated factor 2 (267 aa).

In terms of assembly, component of the REH2-associated complex (REH2C) composed of helicase REH2, associated factors H2F1 and H2F2, and mRNAs at various editing stages; the formation of the complex is RNA-independent. Interacts with various editing complexes including the RNA editing core (RECC) complex, the gRNA-binding (GRBC) complex (also known as the MRB1 complex) and the RNA editing mediator (REMC) complex.

It is found in the mitochondrion. In terms of biological role, may play a role in mitochondrial mRNA editing by facilitating the association of the gRNA-binding (GRBC) complex with the RNA editing core (RECC) complex. However, appears to be dispensable for mRNA editing per se. This chain is REH2-associated factor 2, found in Trypanosoma brucei brucei (strain 927/4 GUTat10.1).